The chain runs to 311 residues: Putative pyruvate, phosphate dikinase regulatory protein (311 aa).

180–187 (GVSRSSKT) serves as a coordination point for ADP.

It belongs to the pyruvate, phosphate/water dikinase regulatory protein family. PDRP subfamily.

It carries out the reaction N(tele)-phospho-L-histidyl/L-threonyl-[pyruvate, phosphate dikinase] + ADP = N(tele)-phospho-L-histidyl/O-phospho-L-threonyl-[pyruvate, phosphate dikinase] + AMP + H(+). The enzyme catalyses N(tele)-phospho-L-histidyl/O-phospho-L-threonyl-[pyruvate, phosphate dikinase] + phosphate + H(+) = N(tele)-phospho-L-histidyl/L-threonyl-[pyruvate, phosphate dikinase] + diphosphate. In terms of biological role, bifunctional serine/threonine kinase and phosphorylase involved in the regulation of the pyruvate, phosphate dikinase (PPDK) by catalyzing its phosphorylation/dephosphorylation. The sequence is that of Putative pyruvate, phosphate dikinase regulatory protein from Paramagnetospirillum magneticum (strain ATCC 700264 / AMB-1) (Magnetospirillum magneticum).